The following is a 484-amino-acid chain: Probable cobyric acid synthase (484 aa).

In terms of domain architecture, GATase cobBQ-type spans 247–433; the sequence is ELHIQIVKLP…LHGIFHNFAF (187 aa). C325 acts as the Nucleophile in catalysis. H425 is a catalytic residue.

Belongs to the CobB/CobQ family. CobQ subfamily.

It functions in the pathway cofactor biosynthesis; adenosylcobalamin biosynthesis. In terms of biological role, catalyzes amidations at positions B, D, E, and G on adenosylcobyrinic A,C-diamide. NH(2) groups are provided by glutamine, and one molecule of ATP is hydrogenolyzed for each amidation. In Thermococcus onnurineus (strain NA1), this protein is Probable cobyric acid synthase.